Reading from the N-terminus, the 874-residue chain is Alanine--tRNA ligase (874 aa).

H562, H566, C664, and H668 together coordinate Zn(2+).

This sequence belongs to the class-II aminoacyl-tRNA synthetase family. Requires Zn(2+) as cofactor.

Its subcellular location is the cytoplasm. The enzyme catalyses tRNA(Ala) + L-alanine + ATP = L-alanyl-tRNA(Ala) + AMP + diphosphate. Its function is as follows. Catalyzes the attachment of alanine to tRNA(Ala) in a two-step reaction: alanine is first activated by ATP to form Ala-AMP and then transferred to the acceptor end of tRNA(Ala). Also edits incorrectly charged Ser-tRNA(Ala) and Gly-tRNA(Ala) via its editing domain. This is Alanine--tRNA ligase from Shewanella sp. (strain MR-7).